The sequence spans 194 residues: Protein GrpE (194 aa).

It belongs to the GrpE family. In terms of assembly, homodimer.

It is found in the cytoplasm. In terms of biological role, participates actively in the response to hyperosmotic and heat shock by preventing the aggregation of stress-denatured proteins, in association with DnaK and GrpE. It is the nucleotide exchange factor for DnaK and may function as a thermosensor. Unfolded proteins bind initially to DnaJ; upon interaction with the DnaJ-bound protein, DnaK hydrolyzes its bound ATP, resulting in the formation of a stable complex. GrpE releases ADP from DnaK; ATP binding to DnaK triggers the release of the substrate protein, thus completing the reaction cycle. Several rounds of ATP-dependent interactions between DnaJ, DnaK and GrpE are required for fully efficient folding. This is Protein GrpE from Aliivibrio fischeri (strain MJ11) (Vibrio fischeri).